Reading from the N-terminus, the 91-residue chain is DNA-binding protein HU (91 aa).

It belongs to the bacterial histone-like protein family.

Histone-like DNA-binding protein which is capable of wrapping DNA to stabilize it, and thus to prevent its denaturation under extreme environmental conditions. Also seems to act as a fortuitous virulence factor in delayed sequelae by binding to heparan sulfate-proteoglycans in the extracellular matrix of target organs and acting as a nidus for in situ immune complex formation. The sequence is that of DNA-binding protein HU (hup) from Streptococcus mutans serotype c (strain ATCC 700610 / UA159).